The chain runs to 486 residues: Aspartyl/glutamyl-tRNA(Asn/Gln) amidotransferase subunit B (486 aa).

Belongs to the GatB/GatE family. GatB subfamily. In terms of assembly, heterotrimer of A, B and C subunits.

The enzyme catalyses L-glutamyl-tRNA(Gln) + L-glutamine + ATP + H2O = L-glutaminyl-tRNA(Gln) + L-glutamate + ADP + phosphate + H(+). It carries out the reaction L-aspartyl-tRNA(Asn) + L-glutamine + ATP + H2O = L-asparaginyl-tRNA(Asn) + L-glutamate + ADP + phosphate + 2 H(+). Allows the formation of correctly charged Asn-tRNA(Asn) or Gln-tRNA(Gln) through the transamidation of misacylated Asp-tRNA(Asn) or Glu-tRNA(Gln) in organisms which lack either or both of asparaginyl-tRNA or glutaminyl-tRNA synthetases. The reaction takes place in the presence of glutamine and ATP through an activated phospho-Asp-tRNA(Asn) or phospho-Glu-tRNA(Gln). The protein is Aspartyl/glutamyl-tRNA(Asn/Gln) amidotransferase subunit B of Leptospira borgpetersenii serovar Hardjo-bovis (strain JB197).